We begin with the raw amino-acid sequence, 270 residues long: MSAPCHCKHVDDSSSNDKLSALSPELQQEFKDPNHPANLICELCRLFYDNNWVTGTGGGISIRDVDGPNPNLVYIAPSGVQKERIQPWEMFLVELPDEKILRTPNDIPKELTKSYKYKPSACTPLFISCYTLRDAGACIHTHSQHAVMVTLFFENEKEFAISHIEQIKALPKLKYNDETGKIEKIGSMEYYDKLVIPIIENTPHEEDLTDSLQEAIKNYPGASAVLVRRHGIYVWGETVWKAKVYNEAIDYLLELAVKMKLAGIPLVKQE.

Cys122 contributes to the substrate binding site. Zn(2+) is bound by residues His140 and His142. Residue Glu165 is the Proton donor/acceptor of the active site. His230 is a Zn(2+) binding site.

This sequence belongs to the aldolase class II family. MtnB subfamily. Requires Zn(2+) as cofactor.

The protein localises to the cytoplasm. It catalyses the reaction 5-(methylsulfanyl)-D-ribulose 1-phosphate = 5-methylsulfanyl-2,3-dioxopentyl phosphate + H2O. The protein operates within amino-acid biosynthesis; L-methionine biosynthesis via salvage pathway; L-methionine from S-methyl-5-thio-alpha-D-ribose 1-phosphate: step 2/6. Its function is as follows. Catalyzes the dehydration of methylthioribulose-1-phosphate (MTRu-1-P) into 2,3-diketo-5-methylthiopentyl-1-phosphate (DK-MTP-1-P). The protein is Methylthioribulose-1-phosphate dehydratase of Candida albicans (strain SC5314 / ATCC MYA-2876) (Yeast).